Reading from the N-terminus, the 261-residue chain is Segregation and condensation protein A (261 aa).

The protein belongs to the ScpA family. As to quaternary structure, component of a cohesin-like complex composed of ScpA, ScpB and the Smc homodimer, in which ScpA and ScpB bind to the head domain of Smc. The presence of the three proteins is required for the association of the complex with DNA.

Its subcellular location is the cytoplasm. In terms of biological role, participates in chromosomal partition during cell division. May act via the formation of a condensin-like complex containing Smc and ScpB that pull DNA away from mid-cell into both cell halves. In Ligilactobacillus salivarius (strain UCC118) (Lactobacillus salivarius), this protein is Segregation and condensation protein A.